The chain runs to 118 residues: Fluoride-specific ion channel FluC 2 (118 aa).

The next 4 helical transmembrane spans lie at 1–21 (MIEA…RFAI), 33–53 (FPLA…YIIG), 55–75 (GVTT…FTTF), and 91–111 (ISTF…FAFL). Na(+)-binding residues include glycine 70 and threonine 73.

It belongs to the fluoride channel Fluc/FEX (TC 1.A.43) family.

Its subcellular location is the cell membrane. It catalyses the reaction fluoride(in) = fluoride(out). Its activity is regulated as follows. Na(+) is not transported, but it plays an essential structural role and its presence is essential for fluoride channel function. Fluoride-specific ion channel. Important for reducing fluoride concentration in the cell, thus reducing its toxicity. The polypeptide is Fluoride-specific ion channel FluC 2 (Bacillus cereus (strain ATCC 14579 / DSM 31 / CCUG 7414 / JCM 2152 / NBRC 15305 / NCIMB 9373 / NCTC 2599 / NRRL B-3711)).